A 633-amino-acid polypeptide reads, in one-letter code: FAD-binding monooxygenase andJ (633 aa).

Residues 117-120 (TWYW), 129-130 (DT), and Tyr-135 contribute to the FAD site. 127–129 (MCD) is a binding site for NADP(+). Residues 269–275 (TGASAVQ) and 292–293 (RT) each bind NADP(+).

Belongs to the FAD-binding monooxygenase family. The cofactor is FAD.

It participates in secondary metabolite biosynthesis; terpenoid biosynthesis. Functionally, FAD-binding monooxygenase; part of the gene cluster that mediates the biosynthesis of anditomin, a fungal meroterpenoid. The first step of the pathway is the synthesis of 3,5-dimethylorsellinic acid (DMOA) by the polyketide synthase andM. DMOA is then converted to the phthalide compound 5,7-dihydroxy-4,6-dimethylphthalide (DHDMP) by the cytochrome P450 monooxygenase andK, which is further prenylated by the prenyltransferase andD to yield farnesyl-DHDMP. Further epoxidation by the FAD-dependent monooxygenase andE leads to epoxyfarnesyl-DHDMP. The next step involves the terpene cyclase andB that converts epoxyfarnesyl-DHDMP into preandiloid A through opening of the epoxide ring followed by the cyclization of the farnesyl moiety. Preandiloid A is in turn oxidized at the C-3 hydroxyl group to yield preandiloid B by the dehydrogenase andC. The dioxygenase andA is solely responsible for the dehydrogenation of preandiloid B leading to the enone preandiloid C, as well as for the intriguing structural rearrangement to generate the bicyclo[2.2.2]octane core, transforming preandiloid C into andiconin. FAD-binding monooxygenase andJ then produces andilesin D which is reduced by dehydrogenase andI to yield andilesin A. Action of acetyltransferase andG followed by a spontaneous acetate elimination leads then to andilesin B, which is in turn substrate of the short chain dehydrogenase andH to yield andilesin C. Finally, the dioxygenase andF catalyzes the transformation of andilesin C to anditomin. In Emericella variicolor (Aspergillus stellatus), this protein is FAD-binding monooxygenase andJ.